A 362-amino-acid polypeptide reads, in one-letter code: Probable dual-specificity RNA methyltransferase RlmN (362 aa).

Glu105 (proton acceptor) is an active-site residue. One can recognise a Radical SAM core domain in the interval 111-344 (HEYGNSICVT…VTIRREQGHD (234 aa)). Cys118 and Cys349 are joined by a disulfide. 3 residues coordinate [4Fe-4S] cluster: Cys125, Cys129, and Cys132. Residues 175-176 (GE), Ser207, 230-232 (SLH), and Asn306 each bind S-adenosyl-L-methionine. The S-methylcysteine intermediate role is filled by Cys349.

This sequence belongs to the radical SAM superfamily. RlmN family. Requires [4Fe-4S] cluster as cofactor.

The protein resides in the cytoplasm. It catalyses the reaction adenosine(2503) in 23S rRNA + 2 reduced [2Fe-2S]-[ferredoxin] + 2 S-adenosyl-L-methionine = 2-methyladenosine(2503) in 23S rRNA + 5'-deoxyadenosine + L-methionine + 2 oxidized [2Fe-2S]-[ferredoxin] + S-adenosyl-L-homocysteine. It carries out the reaction adenosine(37) in tRNA + 2 reduced [2Fe-2S]-[ferredoxin] + 2 S-adenosyl-L-methionine = 2-methyladenosine(37) in tRNA + 5'-deoxyadenosine + L-methionine + 2 oxidized [2Fe-2S]-[ferredoxin] + S-adenosyl-L-homocysteine. Its function is as follows. Specifically methylates position 2 of adenine 2503 in 23S rRNA and position 2 of adenine 37 in tRNAs. In Bacillus anthracis (strain A0248), this protein is Probable dual-specificity RNA methyltransferase RlmN.